Consider the following 76-residue polypeptide: Cytochrome c oxidase subunit 6C (76 aa).

Topologically, residues 4 to 22 (GALLPKPQMRGLLAKRLRV) are mitochondrial matrix. A helical membrane pass occupies residues 23-44 (HIAGAFIVALGVAAAYKFGVAE). Residues 45 to 76 (PRKKAYAEFYRNYDSMKDFEEMRKAGIFQSAK) are Mitochondrial intermembrane-facing.

This sequence belongs to the cytochrome c oxidase subunit 6c family. Component of the cytochrome c oxidase (complex IV, CIV), a multisubunit enzyme composed of 14 subunits. The complex is composed of a catalytic core of 3 subunits MT-CO1, MT-CO2 and MT-CO3, encoded in the mitochondrial DNA, and 11 supernumerary subunits COX4I, COX5A, COX5B, COX6A, COX6B, COX6C, COX7A, COX7B, COX7C, COX8 and NDUFA4, which are encoded in the nuclear genome. The complex exists as a monomer or a dimer and forms supercomplexes (SCs) in the inner mitochondrial membrane with NADH-ubiquinone oxidoreductase (complex I, CI) and ubiquinol-cytochrome c oxidoreductase (cytochrome b-c1 complex, complex III, CIII), resulting in different assemblies (supercomplex SCI(1)III(2)IV(1) and megacomplex MCI(2)III(2)IV(2)). In terms of processing, acetylation of Lys-61 is observed in liver mitochondria from fasted mice but not from fed mice.

It localises to the mitochondrion inner membrane. Its pathway is energy metabolism; oxidative phosphorylation. Functionally, component of the cytochrome c oxidase, the last enzyme in the mitochondrial electron transport chain which drives oxidative phosphorylation. The respiratory chain contains 3 multisubunit complexes succinate dehydrogenase (complex II, CII), ubiquinol-cytochrome c oxidoreductase (cytochrome b-c1 complex, complex III, CIII) and cytochrome c oxidase (complex IV, CIV), that cooperate to transfer electrons derived from NADH and succinate to molecular oxygen, creating an electrochemical gradient over the inner membrane that drives transmembrane transport and the ATP synthase. Cytochrome c oxidase is the component of the respiratory chain that catalyzes the reduction of oxygen to water. Electrons originating from reduced cytochrome c in the intermembrane space (IMS) are transferred via the dinuclear copper A center (CU(A)) of subunit 2 and heme A of subunit 1 to the active site in subunit 1, a binuclear center (BNC) formed by heme A3 and copper B (CU(B)). The BNC reduces molecular oxygen to 2 water molecules using 4 electrons from cytochrome c in the IMS and 4 protons from the mitochondrial matrix. The sequence is that of Cytochrome c oxidase subunit 6C (Cox6c) from Mus musculus (Mouse).